A 307-amino-acid polypeptide reads, in one-letter code: Methionyl-tRNA formyltransferase (307 aa).

109–112 (SLLP) provides a ligand contact to (6S)-5,6,7,8-tetrahydrofolate.

Belongs to the Fmt family.

The enzyme catalyses L-methionyl-tRNA(fMet) + (6R)-10-formyltetrahydrofolate = N-formyl-L-methionyl-tRNA(fMet) + (6S)-5,6,7,8-tetrahydrofolate + H(+). Functionally, attaches a formyl group to the free amino group of methionyl-tRNA(fMet). The formyl group appears to play a dual role in the initiator identity of N-formylmethionyl-tRNA by promoting its recognition by IF2 and preventing the misappropriation of this tRNA by the elongation apparatus. This Dechloromonas aromatica (strain RCB) protein is Methionyl-tRNA formyltransferase.